The primary structure comprises 1758 residues: Y' element ATP-dependent helicase YJL225C (1758 aa).

Residues 668–845 form the Helicase ATP-binding domain; the sequence is EIYMADTPSV…LQRIGLTGLA (178 aa). Position 681–688 (681–688) interacts with ATP; the sequence is APPGYGKT. The Helicase C-terminal domain occupies 900-1051; sequence ALKLLLALFE…EFYGLESKKG (152 aa). Residues 1142-1360 show a composition bias toward low complexity; the sequence is NVRTNATTNA…ATTTESTNAS (219 aa). The interval 1142–1384 is disordered; that stretch reads NVRTNATTNA…RFHPVTDINK (243 aa). Positions 1361–1384 are enriched in basic and acidic residues; that stretch reads AKEDANKDGNAEDNRFHPVTDINK.

Belongs to the helicase family. Yeast subtelomeric Y' repeat subfamily.

Catalyzes DNA unwinding and is involved in telomerase-independent telomere maintenance. This Saccharomyces cerevisiae (strain ATCC 204508 / S288c) (Baker's yeast) protein is Y' element ATP-dependent helicase YJL225C.